We begin with the raw amino-acid sequence, 514 residues long: MSASTSRTLPPEIAESESVMALIERGKADGQIAGDDVRRAFEADQIPPTQWKNVLRSLNQILEEEGVTLMVSAAESPKRARKSVAAKSPVKRTATKTVAAKTTVTRTVAATAAPAVESADAADDAVAAAPAKKTAAKKATAKKAAAKKTTAKKTAAKKSGKQDDEILDGDEAAEEVKAGKGEEEEGEGENKGFVLSDDDEDDAPAQQVAVAGATADPVKDYLKQIGKVPLLNAEQEVELAKRIEAGLFAEDKLANADKLAPKLKRELEIIAEDGRRAKNHLLEANLRLVVSLAKRYTGRGMLFLDLIQEGNLGLIRAVEKFDYTKGYKFSTYATWWIRQAITRAMADQARTIRIPVHMVEVINKLARVQRQMLQDLGREPTPEELAKELDMTPEKVIEVQKYGREPISLHTPLGEDGDSEFGDLIEDSEAVVPADAVSFTLLQEQLHSVLDTLSEREAGVVSMRFGLTDGQPKTLDEIGKVYGVTRERIRQIESKTMSKLRHPSRSQVLRDYLD.

The span at Ala135–Ser159 shows a compositional bias: basic residues. The interval Ala135–Ala205 is disordered. A sigma-70 factor domain-2 region spans residues Leu281 to Thr351. The Interaction with polymerase core subunit RpoC signature appears at Asp305 to Gln308. The tract at residues Glu360–Ala436 is sigma-70 factor domain-3. The interval Val449–His502 is sigma-70 factor domain-4. The H-T-H motif DNA-binding region spans Leu475–Ser494.

It belongs to the sigma-70 factor family. RpoD/SigA subfamily. As to quaternary structure, interacts transiently with the RNA polymerase catalytic core.

It is found in the cytoplasm. Functionally, sigma factors are initiation factors that promote the attachment of RNA polymerase to specific initiation sites and are then released. This sigma factor is the primary sigma factor during exponential growth. This chain is RNA polymerase sigma factor SigA, found in Streptomyces griseus.